A 215-amino-acid polypeptide reads, in one-letter code: Cytochrome b6 (215 aa).

Residues 32–52 (IFYCLGGITLTCFIIQVATGF) form a helical membrane-spanning segment. Cys35 lines the heme c pocket. Heme b-binding residues include His86 and His100. 3 helical membrane passes run 90-110 (ASMM…TGGF), 116-136 (LTWV…VTGY), and 186-206 (LHTF…FLMI). Residues His187 and His202 each coordinate heme b.

It belongs to the cytochrome b family. PetB subfamily. In terms of assembly, the 4 large subunits of the cytochrome b6-f complex are cytochrome b6, subunit IV (17 kDa polypeptide, PetD), cytochrome f and the Rieske protein, while the 4 small subunits are PetG, PetL, PetM and PetN. The complex functions as a dimer. Requires heme b as cofactor. The cofactor is heme c.

It is found in the plastid. The protein localises to the chloroplast thylakoid membrane. Component of the cytochrome b6-f complex, which mediates electron transfer between photosystem II (PSII) and photosystem I (PSI), cyclic electron flow around PSI, and state transitions. The chain is Cytochrome b6 from Zygnema circumcarinatum (Green alga).